The primary structure comprises 210 residues: Mitochondrial import receptor subunit TOM20-2 (210 aa).

At methionine 1 the chain carries N-acetylmethionine. Over 1-178 (MEFSTADFER…SSKKKKRNTE (178 aa)) the chain is Cytoplasmic. 2 TPR repeats span residues 42 to 75 (LLEL…NPGK) and 83 to 120 (ANAY…DPGN). Positions 151-161 (GGGGGGGGGGM) are enriched in gly residues. The disordered stretch occupies residues 151-172 (GGGGGGGGGGMASSNVSQSSKK). A helical transmembrane segment spans residues 179 to 199 (FTYDVCGWIILACGIVAWVGM). Over 200 to 210 (AKSLGPPPPAR) the chain is Mitochondrial intermembrane.

Belongs to the Tom20 family. In terms of assembly, forms part of the preprotein translocase complex of the outer mitochondrial membrane (TOM complex) which consists of at least 6 different proteins (TOM5, TOM6, TOM7, TOM20, TOM22/TOM9 and TOM40). Component of a mitochondrial large protein complex that contains, at least, MIC60, DGS1, TOM40, TOM20 proteins, and petC/RISP. The N-terminus is blocked. In terms of tissue distribution, expressed in roots, flowers, young cotyledons and leaves.

Its subcellular location is the mitochondrion outer membrane. Functionally, central component of the receptor complex responsible for the recognition and translocation of cytosolically synthesized mitochondrial preproteins. Together with TOM22 functions as the transit peptide receptor at the surface of the mitochondrion outer membrane and facilitates the movement of preproteins into the translocation pore. This Arabidopsis thaliana (Mouse-ear cress) protein is Mitochondrial import receptor subunit TOM20-2.